We begin with the raw amino-acid sequence, 585 residues long: Protein DENND6B (585 aa).

Positions 1–10 are enriched in low complexity; that stretch reads MEVPVGPGPR. Positions 1–25 are disordered; the sequence is MEVPVGPGPRQAGGGLGATRSSSSG. The region spanning 43 to 221 is the uDENN domain; the sequence is ECVCVVTFDL…IQVRIPSRVD (179 aa). The cDENN domain maps to 246–373; it reads VHELDLFRCF…VKLKKPSRLK (128 aa). The dDENN domain occupies 375–499; the sequence is LDTKPGLYTS…KSPHFDGWYR (125 aa).

It belongs to the DENND6 family.

The protein localises to the recycling endosome. The protein resides in the cytoplasm. Its function is as follows. Guanine nucleotide exchange factor (GEF) for RAB14. Also has some, lesser GEF activity towards RAB35. This chain is Protein DENND6B (Dennd6b), found in Mus musculus (Mouse).